Consider the following 210-residue polypeptide: Phosphoheptose isomerase (210 aa).

Residues 38–202 (IAACLARGGK…ENVAALAPYL (165 aa)) form the SIS domain. 53-55 (NGG) contacts substrate. Zn(2+) contacts are provided by His-62 and Glu-66. Substrate-binding positions include Glu-66, 95–96 (ND), 121–123 (STS), Ser-126, and Gln-173. The Zn(2+) site is built by Gln-173 and His-181.

The protein belongs to the SIS family. GmhA subfamily. As to quaternary structure, homotetramer. Zn(2+) serves as cofactor.

It localises to the cytoplasm. The enzyme catalyses 2 D-sedoheptulose 7-phosphate = D-glycero-alpha-D-manno-heptose 7-phosphate + D-glycero-beta-D-manno-heptose 7-phosphate. It participates in carbohydrate biosynthesis; D-glycero-D-manno-heptose 7-phosphate biosynthesis; D-glycero-alpha-D-manno-heptose 7-phosphate and D-glycero-beta-D-manno-heptose 7-phosphate from sedoheptulose 7-phosphate: step 1/1. Its function is as follows. Catalyzes the isomerization of sedoheptulose 7-phosphate in D-glycero-D-manno-heptose 7-phosphate. This Desulfovibrio desulfuricans (strain ATCC 27774 / DSM 6949 / MB) protein is Phosphoheptose isomerase.